The primary structure comprises 458 residues: Adenylosuccinate synthetase (458 aa).

GTP is bound by residues 17–23 (GDEGKGK) and 45–47 (GHT). Asp18 serves as the catalytic Proton acceptor. Mg(2+) is bound by residues Asp18 and Gly45. IMP-binding positions include 18–21 (DEGK), 43–46 (NAGH), Thr137, Arg151, Gln247, Thr262, and Arg330. His46 functions as the Proton donor in the catalytic mechanism. 326–332 (VTTGRSR) contacts substrate. Residues Arg332, 358-360 (KLD), and 440-442 (STS) contribute to the GTP site.

Belongs to the adenylosuccinate synthetase family. Homodimer. It depends on Mg(2+) as a cofactor.

The protein localises to the cytoplasm. The catalysed reaction is IMP + L-aspartate + GTP = N(6)-(1,2-dicarboxyethyl)-AMP + GDP + phosphate + 2 H(+). The protein operates within purine metabolism; AMP biosynthesis via de novo pathway; AMP from IMP: step 1/2. Functionally, plays an important role in the de novo pathway of purine nucleotide biosynthesis. Catalyzes the first committed step in the biosynthesis of AMP from IMP. This chain is Adenylosuccinate synthetase, found in Acidovorax sp. (strain JS42).